The following is a 392-amino-acid chain: Elongation factor Tu (392 aa).

The 193-residue stretch at 10–202 (KVHVNVGTIG…VLDEYIEDPI (193 aa)) folds into the tr-type G domain. The tract at residues 19–26 (GHVDHGKT) is G1. 19–26 (GHVDHGKT) is a GTP binding site. T26 contacts Mg(2+). The segment at 60–64 (GITIN) is G2. The tract at residues 81–84 (DCPG) is G3. GTP is bound by residues 81–85 (DCPGH) and 136–139 (NKCD). The segment at 136–139 (NKCD) is G4. The segment at 174-176 (SAL) is G5.

This sequence belongs to the TRAFAC class translation factor GTPase superfamily. Classic translation factor GTPase family. EF-Tu/EF-1A subfamily. As to quaternary structure, monomer.

It localises to the cytoplasm. The catalysed reaction is GTP + H2O = GDP + phosphate + H(+). In terms of biological role, GTP hydrolase that promotes the GTP-dependent binding of aminoacyl-tRNA to the A-site of ribosomes during protein biosynthesis. This Phytoplasma mali (strain AT) protein is Elongation factor Tu.